The primary structure comprises 350 residues: Protein RecA (350 aa).

65-72 (GPESSGKT) lines the ATP pocket.

This sequence belongs to the RecA family.

The protein localises to the cytoplasm. In terms of biological role, can catalyze the hydrolysis of ATP in the presence of single-stranded DNA, the ATP-dependent uptake of single-stranded DNA by duplex DNA, and the ATP-dependent hybridization of homologous single-stranded DNAs. It interacts with LexA causing its activation and leading to its autocatalytic cleavage. The protein is Protein RecA of Clostridium tetani (strain Massachusetts / E88).